The chain runs to 249 residues: MAAARKDAGVLALFDVDGTLTAPRKEVTPEMLEFMKRLRENVTVGVVGGSDLVKISEQLGKSVITDYDYVFSENGLVAHKDGKLIGTQSLKTYLGDDQLKEFINFTLHYIADLDIPIKRGTFIEFRSGMINVSPIGRNCSQEERDDFEKYDKVHNVRPKMVSVLREKFAHLNLTFSIGGQISFDVFPQGWDKTYCLRYLEEFKEIHFFGDKTYKGGNDHEIFESDRTVGHTVTSPNDTVQQCKSIFLSE.

The active-site Nucleophile is the Asp15. Mg(2+) is bound by residues Asp15 and Asp17. Residue Asp17 is the Proton donor/acceptor of the active site. Arg24, Arg126, Arg137, Arg144, Ser182, and Asp184 together coordinate alpha-D-mannose 1-phosphate. 3 residues coordinate Mg(2+): Asp210, Phe222, and Thr227.

This sequence belongs to the eukaryotic PMM family. Homodimer. Requires Mg(2+) as cofactor. As to expression, expressed in roots, leaves, flag leaves and immature spikes.

The protein resides in the cytoplasm. The catalysed reaction is alpha-D-mannose 1-phosphate = D-mannose 6-phosphate. It functions in the pathway nucleotide-sugar biosynthesis; GDP-alpha-D-mannose biosynthesis; alpha-D-mannose 1-phosphate from D-fructose 6-phosphate: step 2/2. Its function is as follows. Catalyzes the interconversion of mannose-6-phosphate to mannose-1-phosphate, the precursor for the synthesis of GDP-mannose. GDP-mannose is an essential sugar nucleotide for the synthesis of D-mannose-containing cell wall polysaccharides (galactomannans and glucomannans), glycolipids, glycoproteins and the antioxidant L-ascorbate. Can complement the yeast temperature-sensitive mutant sec53-6. The protein is Phosphomannomutase of Triticum aestivum (Wheat).